Consider the following 923-residue polypeptide: Ubiquitin carboxyl-terminal hydrolase 10 (923 aa).

Residues 19–134 enclose the DUSP domain; sequence FTPEEEKRIV…GGPPIERKLI (116 aa). A disordered region spans residues 65-91; that stretch reads NECSTGESSEAPRPGPIDNHDIIESDS. Residues 304 to 895 enclose the USP domain; the sequence is AGLSNLGNTC…AAYVLFYRRV (592 aa). The active-site Nucleophile is the cysteine 313. The Proton acceptor role is filled by histidine 853.

Belongs to the peptidase C19 family.

It catalyses the reaction Thiol-dependent hydrolysis of ester, thioester, amide, peptide and isopeptide bonds formed by the C-terminal Gly of ubiquitin (a 76-residue protein attached to proteins as an intracellular targeting signal).. Its function is as follows. Recognizes and hydrolyzes the peptide bond at the C-terminal Gly of ubiquitin. Involved in the processing of poly-ubiquitin precursors as well as that of ubiquitinated proteins. The sequence is that of Ubiquitin carboxyl-terminal hydrolase 10 (UBP10) from Arabidopsis thaliana (Mouse-ear cress).